The following is a 304-amino-acid chain: Neurexophilin-4 (304 aa).

The first 23 residues, 1 to 23 (MRLLPEWLLLLFGPWLLRKVISG), serve as a signal peptide directing secretion. An II region spans residues 24 to 84 (QIVESGRPQY…GALARPGAAG (61 aa)). N-linked (GlcNAc...) asparagine glycosylation is found at N72, N133, N143, and N149. Residues 85–163 (GPPVPRTKRK…IVPPSKRVEF (79 aa)) are III. The tract at residues 164–220 (GGVWLPGPAPHPLQSTLALEGVLPGLGPPLGMAGQGLGGNLGGALAGPLGGALGVPG) is IV (linker domain). Positions 221-304 (AKESRAFNCH…NFQSEHPYFG (84 aa)) are v (Cys-rich).

This sequence belongs to the neurexophilin family. In terms of processing, may be proteolytically processed in neuron-like cells. As to expression, brain and kidney.

Its subcellular location is the secreted. In terms of biological role, may be signaling molecules that resemble neuropeptides and that act by binding to alpha-neurexins and possibly other receptors. The polypeptide is Neurexophilin-4 (Nxph4) (Rattus norvegicus (Rat)).